The primary structure comprises 1126 residues: MGFNEFMTKLFGNKSQRDLKEITPYVDKVKAVYPSIKALSNDELRAKTDEIKQRIQDYVAEEKAQVEELRKGIEDKELEEREAIWAEVDKIEKAITDKMEVVLEQSLPEVFAIMKDTARRFAENEEVVVTANQFDRDLAARFDFVRIEDDKAIYANHWKAGGNEITWDMIHYDVQLFGGVVLHKGKIAEMATGEGKTLVATLPVFLNALTRNGVHVVTVNDYLSKRDSEWMGPLYMFHGLSVDCIDKHQPNSEARRKAYEADITFGTNNEFGFDYLRDNMAISPKDLVQRKHNYSIVDEVDSVLIDDARTPLIISGPIPRGEEQLFEQFRPNVEVVVNAQKDLCSKLLIEAKKKMASDDQKVVEEGSILLYRSFKGYPRNKALIKFLSEQGVKAQMLKTEEYFMSENMRHMHEATDELYFVIDEKNNSIELTDKGIDLLTGKTDDPTFFVLPDITSQLSQLENMTGTEEEKQAQKDEILANYSVKSERVHTINQLLKAYTLFEKDDEYVVMDNKVMIVDEQTGRIMDGRRYSDGLHQAIEAKERVKVEAATQTFATITLQNYFRMYHKLSGMTGTAETEAGEFWDIYKLDVVVIPTNRPIARNDMNDRIYKTKREKYNAVIEEIVQLTEAGRPVLVGTTSVEISELLSRMLTMRKIQHNVLNAKLHQKEAEIVALAGQKSTVTIATNMAGRGTDIKLSKDVKDAGGLAIIGTERHESRRVDRQLRGRAGRQGDPGSSVFFVSLEDDLMRLFASEKIAGLMDKLGFKEGEVLEHNMLSKSVERAQKKVEENNFGIRKRLLEYDDVMNSQRNVIYTRRRHALMGERIGLDVLNTIYDTSTAIADQHAEDFEGFKLELFKTFAMESPFTEDEFKSMKPEQLVEKLFEEALKTYKRRMERMTQVAHPVIKQVYENQGAMYENIMIPITDGKRMYNVSCNLKEAYDTECKAIVKSFQKSIVLHMIDEGWKEHLREMDELRHSVQNASYENKDPLLIYKLESYNLFKTMVDNMNRKTAAILMRGQIPVREEPTEEQRQAMQARQAAVAQQAAQAIAEERARQRIAVQEAAPEKHEDMSRYRTEKTDLSGNNTQAEAPQPKQAPVRAEKRVGRNDPCPCGSGKKYKNCHGQGL.

Residues Gln175, 193 to 197, and Asp694 contribute to the ATP site; that span reads GEGKT. Positions 1060–1126 are disordered; that stretch reads VQEAAPEKHE…KYKNCHGQGL (67 aa). Residues 1064 to 1080 show a composition bias toward basic and acidic residues; the sequence is APEKHEDMSRYRTEKTD. Positions 1110, 1112, 1121, and 1122 each coordinate Zn(2+).

It belongs to the SecA family. In terms of assembly, monomer and homodimer. Part of the essential Sec protein translocation apparatus which comprises SecA, SecYEG and auxiliary proteins SecDF. Other proteins may also be involved. It depends on Zn(2+) as a cofactor.

The protein resides in the cell inner membrane. It is found in the cytoplasm. It catalyses the reaction ATP + H2O + cellular proteinSide 1 = ADP + phosphate + cellular proteinSide 2.. Its function is as follows. Part of the Sec protein translocase complex. Interacts with the SecYEG preprotein conducting channel. Has a central role in coupling the hydrolysis of ATP to the transfer of proteins into and across the cell membrane, serving as an ATP-driven molecular motor driving the stepwise translocation of polypeptide chains across the membrane. The sequence is that of Protein translocase subunit SecA from Parabacteroides distasonis (strain ATCC 8503 / DSM 20701 / CIP 104284 / JCM 5825 / NCTC 11152).